The chain runs to 499 residues: Putative antiporter subunit mnhD2 (499 aa).

14 consecutive transmembrane segments (helical) span residues 1–21 (MSNL…ILVF), 31–51 (ILSI…LIYV), 77–97 (LSLL…AYGF), 107–127 (FHLP…FLTS), 129–149 (LFNL…LVTL), 160–180 (IVYV…IGML), 208–228 (ISLV…FMWL), 239–259 (LAAL…IRFF), 272–292 (TLLV…VIAY), 307–327 (IGFI…GAIF), 329–349 (LAND…LVYM), 367–387 (FFGV…PFSG), 402–422 (GNYI…YSLF), and 449–469 (GLLS…PVVL).

It belongs to the CPA3 antiporters (TC 2.A.63) subunit D family. In terms of assembly, may form a heterooligomeric complex that consists of seven subunits: mnhA2, mnhB2, mnhC2, mnhD2, mnhE2, mnhF2 and mnhG2.

It localises to the cell membrane. The polypeptide is Putative antiporter subunit mnhD2 (mnhD2) (Staphylococcus epidermidis (strain ATCC 35984 / DSM 28319 / BCRC 17069 / CCUG 31568 / BM 3577 / RP62A)).